Consider the following 1893-residue polypeptide: Serine-aspartate repeat-containing protein I (1893 aa).

An N-terminal signal peptide occupies residues 1 to 54; sequence MNFKGVKLLKNSKKRLDFLPNTLNKYSIRKFTVGTASILVGATLFLGVSNEAEA. Residues 53–333 are disordered; the sequence is EAAEKIDSPT…AHGINNKNKQ (281 aa). Basic and acidic residues predominate over residues 54–222; the sequence is AAEKIDSPTK…AEEPATKEEA (169 aa). 21 repeat units span residues 72-83, 84-95, 96-107, 108-119, 120-131, 132-143, 144-155, 156-167, 168-179, 180-191, 192-203, 204-215, 216-227, 228-239, 240-251, 252-263, 264-275, 276-287, 288-299, 300-311, and 312-323. The interval 72-323 is 21 X 12 AA tandem repeat of [AP]-[AE]-T-K-E-[EK]-A-[AV]-[IT]-[AST]-E-E; the sequence is AATKEEAATT…TKEKAVTSEE (252 aa). The span at 240-284 shows a compositional bias: basic and acidic residues; it reads PATKEEAAIAEEAATKEKAVTSEEAATKEKAAIAEEAATKEKAAI. A compositionally biased stretch (acidic residues) spans 286–302; that stretch reads EEPETKEEAATTEEPET. The span at 312 to 325 shows a compositional bias: basic and acidic residues; that stretch reads PATKEKAVTSEEAH. The segment at 324–755 is ligand binding A region; the sequence is AHGINNKNKQ…GSSTAQGDNP (432 aa). CNA-B domains follow at residues 756–874 and 875–984; these read TYNL…YETP and KYSL…YFDE. The segment at 941 to 1867 is disordered; that stretch reads KPEGLTQTTT…GNNTQNNGTL (927 aa). The span at 955–975 shows a compositional bias: basic and acidic residues; that stretch reads DENKDADGEEVHVTITDHDDF. Residues 981 to 1836 are compositionally biased toward acidic residues; it reads YFDEDSDADA…DSDADADADS (856 aa). Residues 1837 to 1851 are compositionally biased toward basic and acidic residues; it reads DADKYHNDTADKSND. The short motif at 1854–1858 is the LPXTG sorting signal element; that stretch reads LPDTG. T1857 is subject to Pentaglycyl murein peptidoglycan amidated threonine. Residues 1858–1893 constitute a propeptide, removed by sortase; that stretch reads GNNTQNNGTLFGSLFAALGGLFLVGSRRKNKNNEEK.

The protein belongs to the serine-aspartate repeat-containing protein (SDr) family.

It localises to the secreted. It is found in the cell wall. Functionally, responsible for collagen binding by S.saprophyticus. The protein is Serine-aspartate repeat-containing protein I (sdrI) of Staphylococcus saprophyticus.